Reading from the N-terminus, the 384-residue chain is D-alanine--D-alanine ligase (384 aa).

Positions 167–374 constitute an ATP-grasp domain; it reads KKLFAAEGLP…YPTLLATMVD (208 aa). 195-250 contacts ATP; it reads CERLSLPVFVKPARGGSSIGISRVSSWGQLPSAIAYARRHDPKVIVEAAVNGRELE. Mg(2+)-binding residues include aspartate 329, glutamate 341, and asparagine 343.

The protein belongs to the D-alanine--D-alanine ligase family. It depends on Mg(2+) as a cofactor. The cofactor is Mn(2+).

It is found in the cytoplasm. It carries out the reaction 2 D-alanine + ATP = D-alanyl-D-alanine + ADP + phosphate + H(+). It participates in cell wall biogenesis; peptidoglycan biosynthesis. Functionally, cell wall formation. This is D-alanine--D-alanine ligase from Mycobacterium leprae (strain TN).